The sequence spans 220 residues: Elongation factor Ts (220 aa).

The interval 83–86 is involved in Mg(2+) ion dislocation from EF-Tu; sequence TDFV.

This sequence belongs to the EF-Ts family.

It is found in the cytoplasm. Functionally, associates with the EF-Tu.GDP complex and induces the exchange of GDP to GTP. It remains bound to the aminoacyl-tRNA.EF-Tu.GTP complex up to the GTP hydrolysis stage on the ribosome. This chain is Elongation factor Ts, found in Synechococcus sp. (strain CC9605).